The sequence spans 326 residues: B3 domain-containing protein At5g60130 (326 aa).

Residues 12–110 (PKFFKVYLPD…CFHFCIYEHR (99 aa)) constitute a DNA-binding region (TF-B3). A disordered region spans residues 124-222 (EEIKVESDSD…DEDERQYLDD (99 aa)). The segment covering 143–199 (LSLDEDDDDSDYNCGEDNDSDDYADEAAVEKDDNDADDEDVDNVADDVPVEDDDYVE) has biased composition (acidic residues).

Its subcellular location is the nucleus. The chain is B3 domain-containing protein At5g60130 from Arabidopsis thaliana (Mouse-ear cress).